We begin with the raw amino-acid sequence, 106 residues long: Urease subunit beta (106 aa).

It belongs to the urease beta subunit family. As to quaternary structure, heterotrimer of UreA (gamma), UreB (beta) and UreC (alpha) subunits. Three heterotrimers associate to form the active enzyme.

The protein resides in the cytoplasm. The enzyme catalyses urea + 2 H2O + H(+) = hydrogencarbonate + 2 NH4(+). It participates in nitrogen metabolism; urea degradation; CO(2) and NH(3) from urea (urease route): step 1/1. The sequence is that of Urease subunit beta from Escherichia coli O157:H7.